The sequence spans 138 residues: Putative pre-16S rRNA nuclease (138 aa).

The protein belongs to the YqgF nuclease family.

It is found in the cytoplasm. In terms of biological role, could be a nuclease involved in processing of the 5'-end of pre-16S rRNA. The protein is Putative pre-16S rRNA nuclease of Karelsulcia muelleri (strain GWSS) (Sulcia muelleri).